Reading from the N-terminus, the 251-residue chain is Extracellular superoxide dismutase [Cu-Zn] (251 aa).

The first 15 residues, 1–15 (MLAFLFYGLLLAACG), serve as a signal peptide directing secretion. Positions 16–24 (SVTMSNPGE) are excised as a propeptide. 2 disulfide bridges follow: Cys77-Cys222 and Cys139-Cys221. Asn121 carries an N-linked (GlcNAc...) asparagine glycan. Residues His128, His130, and His145 each contribute to the Cu cation site. Residues His145, His153, His156, and Asp159 each contribute to the Zn(2+) site. A Cu cation-binding site is contributed by His195. Positions 230 to 251 (AAWESQTKERKKRRRESECKTT) are disordered.

This sequence belongs to the Cu-Zn superoxide dismutase family. In terms of assembly, homotetramer. Directly interacts with ATP7A/MNK; this interaction is copper-dependent and is required for SOD3 activity. Cu cation serves as cofactor. Requires Zn(2+) as cofactor.

The protein localises to the secreted. The protein resides in the extracellular space. Its subcellular location is the golgi apparatus. It is found in the trans-Golgi network. It carries out the reaction 2 superoxide + 2 H(+) = H2O2 + O2. Protect the extracellular space from toxic effect of reactive oxygen intermediates by converting superoxide radicals into hydrogen peroxide and oxygen. The polypeptide is Extracellular superoxide dismutase [Cu-Zn] (Sod3) (Mus musculus (Mouse)).